A 397-amino-acid polypeptide reads, in one-letter code: CCA-adding enzyme (397 aa).

Gly26 and Arg29 together coordinate ATP. 2 residues coordinate CTP: Gly26 and Arg29. Mg(2+)-binding residues include Asp39 and Asp41. The ATP site is built by Arg110, Asp153, Arg156, Arg159, and Arg162. The CTP site is built by Arg110, Asp153, Arg156, Arg159, and Arg162.

The protein belongs to the tRNA nucleotidyltransferase/poly(A) polymerase family. Bacterial CCA-adding enzyme type 3 subfamily. As to quaternary structure, homodimer. Requires Mg(2+) as cofactor.

The catalysed reaction is a tRNA precursor + 2 CTP + ATP = a tRNA with a 3' CCA end + 3 diphosphate. The enzyme catalyses a tRNA with a 3' CCA end + 2 CTP + ATP = a tRNA with a 3' CCACCA end + 3 diphosphate. Its function is as follows. Catalyzes the addition and repair of the essential 3'-terminal CCA sequence in tRNAs without using a nucleic acid template. Adds these three nucleotides in the order of C, C, and A to the tRNA nucleotide-73, using CTP and ATP as substrates and producing inorganic pyrophosphate. tRNA 3'-terminal CCA addition is required both for tRNA processing and repair. Also involved in tRNA surveillance by mediating tandem CCA addition to generate a CCACCA at the 3' terminus of unstable tRNAs. While stable tRNAs receive only 3'-terminal CCA, unstable tRNAs are marked with CCACCA and rapidly degraded. The chain is CCA-adding enzyme from Bacillus cereus (strain 03BB102).